The primary structure comprises 282 residues: Transformer-2 protein homolog alpha (282 aa).

A disordered region spans residues 1–118; it reads MSDVEENNFE…TGSRANPDPN (118 aa). Ser2 carries the N-acetylserine modification. Residues Ser2 and Ser14 each carry the phosphoserine modification. Thr24 bears the Phosphothreonine mark. Basic residues predominate over residues 51-84; sequence RSRSKSRSRSRRHSHRRYTRSRSHSHSHRRRSRS. Phosphoserine is present on residues Ser82, Ser84, and Ser86. Thr88 is modified (phosphothreonine). The segment covering 92–110 has biased composition (basic residues); it reads RRRRSRSHSPMSNRRRHTG. 2 positions are modified to phosphoserine: Ser96 and Ser98. One can recognise an RRM domain in the interval 119 to 197; that stretch reads TCLGVFGLSL…RRIRVDYSIT (79 aa). Lys198 participates in a covalent cross-link: Glycyl lysine isopeptide (Lys-Gly) (interchain with G-Cter in SUMO2). The tract at residues 198–225 is linker; it reads KRAHTPTPGIYMGRPTHSGGGGGGGGGG. 2 disordered regions span residues 201-245 and 260-282; these read HTPT…YDRG and SPSP…PRRY. Phosphothreonine is present on residues Thr202 and Thr204. Gly residues predominate over residues 215-230; that stretch reads SGGGGGGGGGGGGGGG. Omega-N-methylarginine is present on Arg232. Residues 232 to 245 are compositionally biased toward basic and acidic residues; it reads RRRDSYYDRGYDRG. A Phosphoserine modification is found at Ser236. Residues 268–282 show a composition bias toward basic residues; that stretch reads YRSRSRSRSYSPRRY.

This sequence belongs to the splicing factor SR family. As to quaternary structure, binds to A3 enhancer proteins SRp75, SRp55, SRp40 and SRp30. Interacts with ILDR1 (via C-terminus) and ILDR2. Post-translationally, phosphorylated in the RS domains.

It is found in the nucleus. In terms of biological role, sequence-specific RNA-binding protein which participates in the control of pre-mRNA splicing. The protein is Transformer-2 protein homolog alpha of Homo sapiens (Human).